Here is a 119-residue protein sequence, read N- to C-terminus: MICOS complex subunit MIC13 (119 aa).

Residues 1-7 are Mitochondrial matrix-facing; it reads MVARVWS. A helical membrane pass occupies residues 8–26; that stretch reads LMRFLIKGSVAGGAVYLVY. At 27–119 the chain is on the mitochondrial intermembrane side; that stretch reads DQELLGPSDK…GWEYLKEHSK (93 aa).

Belongs to the MICOS complex subunit Mic13 family. In terms of assembly, component of the mitochondrial contact site and cristae organizing system (MICOS) complex, composed of at least MICOS10/MIC10, CHCHD3/MIC19, CHCHD6/MIC25, APOO/MIC26, MICOS13/MIC13, APOOL/MIC27 and IMMT/MIC60. The MICOS complex associates with mitochondrial outer membrane proteins SAMM50, MTX1 and MTX2 (together described as components of the mitochondrial outer membrane sorting assembly machinery (SAM) complex) and DNAJC11, mitochondrial inner membrane protein TMEM11 and with HSPA9. The MICOS and SAM complexes together with DNAJC11 are part of a large protein complex spanning both membranes termed the mitochondrial intermembrane space bridging (MIB) complex.

It localises to the mitochondrion inner membrane. Component of the MICOS complex, a large protein complex of the mitochondrial inner membrane that plays crucial roles in the maintenance of crista junctions, inner membrane architecture, and formation of contact sites to the outer membrane. Constituent of mature MICOS complex, it is required for the formation of cristae junction (CJ) and maintenance of cristae morphology. Required for the incorporation of MICOS10/MIC10 into the MICOS complex. The protein is MICOS complex subunit MIC13 (Micos13) of Mus musculus (Mouse).